Consider the following 222-residue polypeptide: Ras-related protein Rab-21 (222 aa).

At Ala2 the chain carries N-acetylalanine. GTP is bound by residues Gly26, Gly29, Lys30, Thr31, Ser32, Asn43, Asp44, His46, Thr48, and Thr49. Position 31 (Thr31) interacts with Mg(2+). The short motif at Lys41–Phe54 is the Switch 1 element. 2 residues coordinate Mg(2+): Thr49 and Asp72. The Switch 2 signature appears at Ala74–Gly92. GTP is bound by residues Gly75, Asn130, Lys131, Asp133, Ala161, and Lys162. Residues Cys218 and Cys219 are each lipidated (S-geranylgeranyl cysteine). Position 219 is a cysteine methyl ester (Cys219). The propeptide at Ser220–Gly222 is removed in mature form.

This sequence belongs to the small GTPase superfamily. Rab family. Interacts with the cytoplasmic tail of integrins ITGA1, ITGA2, ITGA5, ITGA6, ITGA11 and ITGB1; this interaction is dependent upon its GDP/GTP cycle. Interacts with RABGEF1 (via VPS9 domain). Interacts with ANKRD27. Interacts with VAMP7. Interacts (in GTP-bound form) with VAMP8 in response to starvation; the interaction probably regulates VAMP8 endolysosomal trafficking. Interacts (active GTP-bound form) with TMED10; the interaction is indirect and regulates TMED10 abundance and localization at the Golgi. Mg(2+) serves as cofactor.

It localises to the endoplasmic reticulum membrane. The protein localises to the golgi apparatus. Its subcellular location is the trans-Golgi network. The protein resides in the golgi apparatus membrane. It is found in the early endosome membrane. It localises to the cytoplasmic vesicle membrane. The protein localises to the cleavage furrow. Its subcellular location is the cell projection. The protein resides in the neuron projection. It carries out the reaction GTP + H2O = GDP + phosphate + H(+). With respect to regulation, regulated by guanine nucleotide exchange factors (GEFs) including ANKRD27 and RABGEF1, which promote the exchange of bound GDP for free GTP. Regulated by GTPase activating proteins (GAPs) which increase the GTP hydrolysis activity. Inhibited by GDP dissociation inhibitors (GDIs). Functionally, the small GTPases Rab are key regulators of intracellular membrane trafficking, from the formation of transport vesicles to their fusion with membranes. Rabs cycle between an inactive GDP-bound form and an active GTP-bound form that is able to recruit to membranes different sets of downstream effectors directly responsible for vesicle formation, movement, tethering and fusion. RAB21 is involved in membrane trafficking control. Regulates integrin internalization and recycling, but does not influence the traffic of endosomally translocated receptors in general. As a result, may regulate cell adhesion and migration. During the mitosis of adherent cells, controls the endosomal trafficking of integrins which is required for the successful completion of cytokinesis. Involved in neurite growth. Following SBF2/MTMT13-mediated activation in response to starvation-induced autophagy, binds to and regulates SNARE protein VAMP8 endolysosomal transport required for SNARE-mediated autophagosome-lysosome fusion. Modulates protein levels of the cargo receptors TMED2 and TMED10, and required for appropriate Golgi localization of TMED10. In Mus musculus (Mouse), this protein is Ras-related protein Rab-21.